Consider the following 138-residue polypeptide: Large ribosomal subunit protein uL16 (138 aa).

The span at 1–15 (MLSPKKVKYRKKQRG) shows a compositional bias: basic residues. The disordered stretch occupies residues 1–20 (MLSPKKVKYRKKQRGRLSGE).

This sequence belongs to the universal ribosomal protein uL16 family. As to quaternary structure, part of the 50S ribosomal subunit.

Its function is as follows. Binds 23S rRNA and is also seen to make contacts with the A and possibly P site tRNAs. The protein is Large ribosomal subunit protein uL16 of Borrelia hermsii (strain HS1 / DAH).